The chain runs to 283 residues: Elongation factor Ts (283 aa).

Positions Thr-79–Val-82 are involved in Mg(2+) ion dislocation from EF-Tu.

The protein belongs to the EF-Ts family.

Its subcellular location is the cytoplasm. Functionally, associates with the EF-Tu.GDP complex and induces the exchange of GDP to GTP. It remains bound to the aminoacyl-tRNA.EF-Tu.GTP complex up to the GTP hydrolysis stage on the ribosome. In Shewanella frigidimarina (strain NCIMB 400), this protein is Elongation factor Ts.